A 453-amino-acid chain; its full sequence is Glutamyl-tRNA(Gln) amidotransferase subunit A (453 aa).

Active-site charge relay system residues include K55 and S130. The active-site Acyl-ester intermediate is S154.

It belongs to the amidase family. GatA subfamily. As to quaternary structure, heterotrimer of A, B and C subunits.

It carries out the reaction L-glutamyl-tRNA(Gln) + L-glutamine + ATP + H2O = L-glutaminyl-tRNA(Gln) + L-glutamate + ADP + phosphate + H(+). Allows the formation of correctly charged Gln-tRNA(Gln) through the transamidation of misacylated Glu-tRNA(Gln) in organisms which lack glutaminyl-tRNA synthetase. The reaction takes place in the presence of glutamine and ATP through an activated gamma-phospho-Glu-tRNA(Gln). The polypeptide is Glutamyl-tRNA(Gln) amidotransferase subunit A (Aliarcobacter butzleri (strain RM4018) (Arcobacter butzleri)).